We begin with the raw amino-acid sequence, 176 residues long: Large ribosomal subunit protein uL10 (176 aa).

It belongs to the universal ribosomal protein uL10 family. In terms of assembly, part of the ribosomal stalk of the 50S ribosomal subunit. The N-terminus interacts with L11 and the large rRNA to form the base of the stalk. The C-terminus forms an elongated spine to which L12 dimers bind in a sequential fashion forming a multimeric L10(L12)X complex.

Forms part of the ribosomal stalk, playing a central role in the interaction of the ribosome with GTP-bound translation factors. This chain is Large ribosomal subunit protein uL10, found in Natranaerobius thermophilus (strain ATCC BAA-1301 / DSM 18059 / JW/NM-WN-LF).